Consider the following 178-residue polypeptide: Large ribosomal subunit protein uL6 (178 aa).

It belongs to the universal ribosomal protein uL6 family. As to quaternary structure, part of the 50S ribosomal subunit.

In terms of biological role, this protein binds to the 23S rRNA, and is important in its secondary structure. It is located near the subunit interface in the base of the L7/L12 stalk, and near the tRNA binding site of the peptidyltransferase center. The polypeptide is Large ribosomal subunit protein uL6 (Streptococcus agalactiae serotype Ia (strain ATCC 27591 / A909 / CDC SS700)).